A 309-amino-acid chain; its full sequence is Taste receptor type 2 member 31 (309 aa).

The Extracellular segment spans residues 1-2; it reads MT. The helical transmembrane segment at 3–23 threads the bilayer; the sequence is TFIPIIFSSLVVVIFVIGNFA. Topologically, residues 24–55 are cytoplasmic; the sequence is NGFIALVNSIEWFKRQKISFADQILTALAVSR. The chain crosses the membrane as a helical span at residues 56 to 76; it reads VGLLWVLLLNWYSTVLNPAFY. Over 77–100 the chain is Extracellular; that stretch reads SVEVRTTAYNVWAVTGHFSNWLAT. The helical transmembrane segment at 101–121 threads the bilayer; the sequence is SLSIFYLLKIANFSNLIFLHL. The Cytoplasmic portion of the chain corresponds to 122-126; sequence KRRVK. Residues 127 to 147 traverse the membrane as a helical segment; that stretch reads SVILVMLLGPLLFLACQLFMI. Topologically, residues 148 to 181 are extracellular; the sequence is NMKEIVRTKEYEGNMTWKIKLRSAVYLSDATVTT. Asn-161 carries an N-linked (GlcNAc...) asparagine glycan. A helical transmembrane segment spans residues 182–202; that stretch reads LGNLVPFTLTLLCFLLLICSL. At 203-229 the chain is on the cytoplasmic side; that stretch reads CKHLKKMQLHGKGSQDPSTKVHIKVLQ. Residues 230-250 traverse the membrane as a helical segment; the sequence is TVISFLLLCAIYFLSIMISVW. Over 251 to 259 the chain is Extracellular; sequence SFGSLKNKP. A helical transmembrane segment spans residues 260 to 280; the sequence is VFMFCKAMRFSYPSIHPFILI. Residues 281-309 lie on the Cytoplasmic side of the membrane; the sequence is WGNKKLKQTFLSVLRQVRYWVKGEKPSSP.

Belongs to the G-protein coupled receptor T2R family.

It localises to the membrane. Its function is as follows. Receptor that may play a role in the perception of bitterness and is gustducin-linked. May play a role in sensing the chemical composition of the gastrointestinal content. The activity of this receptor may stimulate alpha gustducin, mediate PLC-beta-2 activation and lead to the gating of TRPM5. This is Taste receptor type 2 member 31 (TAS2R31) from Pan troglodytes (Chimpanzee).